The chain runs to 850 residues: Tripartite terminase subunit 1 (850 aa).

The segment at 191–219 (CAQCYEELTIIPNQGRSLNKRLQGLLCNH) adopts a C3H1-type zinc-finger fold. The tract at residues 438–489 (GTTLMTASNSSNSSTHSQRNNGGGGRARGGGKKVVGGGVNGQDGDGSENGLR) is disordered. A compositionally biased stretch (low complexity) spans 439–457 (TTLMTASNSSNSSTHSQRN). The segment covering 458 to 481 (NGGGGRARGGGKKVVGGGVNGQDG) has biased composition (gly residues). Residue 709–716 (YNETFGKQ) participates in ATP binding. The tract at residues 801–831 (WLPSPYPSSSTAGVSRRVRATRKRPRRASSL) is disordered. Over residues 816–827 (RRVRATRKRPRR) the composition is skewed to basic residues. The short motif at 822–827 (RKRPRR) is the Nuclear localization signal element.

This sequence belongs to the herpesviridae TRM1 protein family. In terms of assembly, associates with TRM2 and TRM3 to form the tripartite terminase complex. Interacts with portal protein.

The protein resides in the host nucleus. Component of the molecular motor that translocates viral genomic DNA in empty capsid during DNA packaging. Forms a tripartite terminase complex together with TRM2 and TRM3 in the host cytoplasm. Once the complex reaches the host nucleus, it interacts with the capsid portal vertex. This portal forms a ring in which genomic DNA is translocated into the capsid. TRM1 carries an endonuclease activity that plays an important role for the cleavage of concatemeric viral DNA into unit length genomes. This chain is Tripartite terminase subunit 1, found in Homo sapiens (Human).